We begin with the raw amino-acid sequence, 347 residues long: Major capsid protein (347 aa).

Belongs to the baculoviridae major capsid protein family.

It is found in the virion. In terms of biological role, most abundant structural protein of the nucleocapsid produced during the infection cycle. The monomers are arranged in stacked rings around the nucleoprotein core. This chain is Major capsid protein (P39), found in Autographa californica nuclear polyhedrosis virus (AcMNPV).